A 356-amino-acid polypeptide reads, in one-letter code: uncharacterized protein (356 aa).

37-44 (TGASSGIG) is a binding site for NADP(+). Ser168 is a substrate binding site. Tyr181 acts as the Proton acceptor in catalysis.

It belongs to the short-chain dehydrogenases/reductases (SDR) family.

This is an uncharacterized protein from Bacillus subtilis (strain 168).